A 388-amino-acid chain; its full sequence is MEQPSRLCSPPASGSLTSSQTNHSTFPNPNCSAPDLEPYQDSIALPWKVLLATFLGLITLGTTLSNAFVIATVSRTRKLHTPANYLIASLAVTDLLVSILVMPISTMYTVTGRWTLGQVVCDFWLSSDITCCTASILHLCVIALDRYWAITDAVEYSAKRTPKRAAGMIIMVWVFSVSISMPPLFWRQAKAEEVADCSVNTDHILYTVYSTVGAFYFPTLLLIALYGRIYVEARSRILKQTPNRTGKRLTRAQLITDSPGSSSSGTSINSRAPEGPSESGSPVYVNQVKVKVSDALLEKKKLMAARERKATRTLGIILGAFIVCWLPFFIISLALPICDDACWFHLAIFDFFNWLGYLNSLINPIIYTKSNDDFKQAFQKLMRFRRTS.

The interval 1–29 (MEQPSRLCSPPASGSLTSSQTNHSTFPNP) is disordered. Over 1–45 (MEQPSRLCSPPASGSLTSSQTNHSTFPNPNCSAPDLEPYQDSIAL) the chain is Extracellular. Over residues 12-29 (ASGSLTSSQTNHSTFPNP) the composition is skewed to polar residues. Residues N22 and N30 are each glycosylated (N-linked (GlcNAc...) asparagine). A helical transmembrane segment spans residues 46–71 (PWKVLLATFLGLITLGTTLSNAFVIA). At 72–85 (TVSRTRKLHTPANY) the chain is on the cytoplasmic side. The helical transmembrane segment at 86 to 110 (LIASLAVTDLLVSILVMPISTMYTV) threads the bilayer. Over 111 to 118 (TGRWTLGQ) the chain is Extracellular. A helical membrane pass occupies residues 119-144 (VVCDFWLSSDITCCTASILHLCVIAL). Residues C121 and C197 are joined by a disulfide bond. The ergotamine site is built by D128 and T133. Positions 145-147 (DRY) match the DRY motif; important for ligand-induced conformation changes and signaling motif. The Cytoplasmic segment spans residues 145 to 164 (DRYWAITDAVEYSAKRTPKR). A helical membrane pass occupies residues 165–183 (AAGMIIMVWVFSVSISMPP). Residues 184-203 (LFWRQAKAEEVADCSVNTDH) are Extracellular-facing. V199 lines the ergotamine pocket. Residues 204-227 (ILYTVYSTVGAFYFPTLLLIALYG) form a helical membrane-spanning segment. The Cytoplasmic segment spans residues 228–313 (RIYVEARSRI…AARERKATRT (86 aa)). Residues 249–282 (LTRAQLITDSPGSSSSGTSINSRAPEGPSESGSP) are disordered. Residues 255 to 270 (ITDSPGSSSSGTSINS) are compositionally biased toward low complexity. The chain crosses the membrane as a helical span at residues 314-335 (LGIILGAFIVCWLPFFIISLAL). Residues 336–345 (PICDDACWFH) are Extracellular-facing. The helical transmembrane segment at 346-368 (LAIFDFFNWLGYLNSLINPIIYT) threads the bilayer. The NPxxY motif; important for ligand-induced conformation changes and signaling signature appears at 363 to 367 (NPIIY). Residues 369–388 (KSNDDFKQAFQKLMRFRRTS) are Cytoplasmic-facing.

The protein belongs to the G-protein coupled receptor 1 family. Homodimer. Heterodimer with HTR1D. Post-translationally, phosphorylated. Desensitization of the receptor may be mediated by its phosphorylation. Palmitoylated.

The protein resides in the cell membrane. In terms of biological role, G-protein coupled receptor for 5-hydroxytryptamine (serotonin). Also functions as a receptor for ergot alkaloid derivatives, various anxiolytic and antidepressant drugs and other psychoactive substances, such as lysergic acid diethylamide (LSD). Ligand binding causes a conformation change that triggers signaling via guanine nucleotide-binding proteins (G proteins) and modulates the activity of downstream effectors, such as adenylate cyclase. HTR1B is coupled to G(i)/G(o) G alpha proteins and mediates inhibitory neurotransmission by inhibiting adenylate cyclase activity. Arrestin family members inhibit signaling via G proteins and mediate activation of alternative signaling pathways. Regulates the release of 5-hydroxytryptamine, dopamine and acetylcholine in the brain, and thereby affects neural activity, nociceptive processing, pain perception, mood and behavior. Besides, plays a role in vasoconstriction of cerebral arteries. The protein is 5-hydroxytryptamine receptor 1B (HTR1B) of Didelphis virginiana (North American opossum).